A 354-amino-acid chain; its full sequence is Inositol-tetrakisphosphate 1-kinase 1 (354 aa).

Basic and acidic residues predominate over residues 1-16 (MRVHEEASEDKEREVE). Residues 1–24 (MRVHEEASEDKEREVEEAPDLMPL) are disordered. K53 and K95 together coordinate 1D-myo-inositol 1,3,4-trisphosphate. 2 residues coordinate ATP: R130 and K180. The 208-residue stretch at 140-347 (LNLSNAYGEV…FLLSLVQNKY (208 aa)) folds into the ATP-grasp domain. Positions 191 and 223 each coordinate 1D-myo-inositol 1,3,4-trisphosphate. Residues 212–223 (QEFVNHGGILFK) and S238 each bind ATP. Mg(2+) contacts are provided by D303, D318, and N320. 1D-myo-inositol 1,3,4-trisphosphate is bound at residue N320.

This sequence belongs to the ITPK1 family. Monomer. It depends on Mg(2+) as a cofactor. As to expression, expressed in roots, leaves, flowers, anthers and embryos.

The enzyme catalyses 1D-myo-inositol 3,4,5,6-tetrakisphosphate + ATP = 1D-myo-inositol 1,3,4,5,6-pentakisphosphate + ADP + H(+). The catalysed reaction is 1D-myo-inositol 1,3,4-trisphosphate + ATP = 1D-myo-inositol 1,3,4,5-tetrakisphosphate + ADP + H(+). It catalyses the reaction 1D-myo-inositol 1,3,4-trisphosphate + ATP = 1D-myo-inositol 1,3,4,6-tetrakisphosphate + ADP + H(+). Its function is as follows. Kinase that can phosphorylate various inositol polyphosphate such as Ins(3,4,5,6)P4 or Ins(1,3,4)P3 and participates in phytic acid biosynthesis in developing seeds. Phytic acid is the primary storage form of phosphorus in cereal grains and other plant seeds. The chain is Inositol-tetrakisphosphate 1-kinase 1 from Oryza sativa subsp. japonica (Rice).